A 119-amino-acid polypeptide reads, in one-letter code: Integration host factor subunit alpha (119 aa).

Residues 96–119 (INGQQANGKMNGESAPSEFSAETE) are disordered.

The protein belongs to the bacterial histone-like protein family. Heterodimer of an alpha and a beta chain.

In terms of biological role, this protein is one of the two subunits of integration host factor, a specific DNA-binding protein that functions in genetic recombination as well as in transcriptional and translational control. The sequence is that of Integration host factor subunit alpha from Bradyrhizobium sp. (strain ORS 278).